The chain runs to 447 residues: DNA primase DnaG (447 aa).

Positions 200–274 (DSIIVVEGRA…DIDYVARAPE (75 aa)) constitute a Toprim domain. 3 residues coordinate Mg(2+): Glu206, Asp248, and Asp250.

It belongs to the archaeal DnaG primase family. In terms of assembly, forms a ternary complex with MCM helicase and DNA. Component of the archaeal exosome complex. The cofactor is Mg(2+).

The enzyme catalyses ssDNA + n NTP = ssDNA/pppN(pN)n-1 hybrid + (n-1) diphosphate.. Functionally, RNA polymerase that catalyzes the synthesis of short RNA molecules used as primers for DNA polymerase during DNA replication. Also part of the exosome, which is a complex involved in RNA degradation. Acts as a poly(A)-binding protein that enhances the interaction between heteromeric, adenine-rich transcripts and the exosome. The sequence is that of DNA primase DnaG from Pyrococcus horikoshii (strain ATCC 700860 / DSM 12428 / JCM 9974 / NBRC 100139 / OT-3).